A 71-amino-acid chain; its full sequence is Pro-MCH (71 aa).

The N-terminal stretch at 1–20 (AKMNLSSYILILTFSLFSQG) is a signal peptide.

Belongs to the melanin-concentrating hormone family.

Its subcellular location is the secreted. In Hylobates lar (Lar gibbon), this protein is Pro-MCH (PMCH).